A 337-amino-acid chain; its full sequence is MTRVAINGFGRIGRNFLRCWLGRTDSQLEVVGINDTSDPRTNAHLLRYDSMLGKLDADISADENSITVNGKTIKCVSDRNPLNLPWAEWNVDLVIEATGVFVTHEGATKHVQAGAKKVLITAPGKGPNIGTYVVGVNAHEYKHEEYEVISNASCTTNCLAPFGKVINDNFGIIKGTMTTTHSYTGDQRILDASHRDLRRARAAAVNIVPTSTGAAKAVALVIPELQGKLNGIALRVPTPNVSVVDLVVQVEKNTIAEQVNGVLKEAANTSLKGVLEYTDLELVSSDFRGTDCSSTVDGSLTMVMGGDMVKVIAWYDNEWGYSQRVVDLAEIVAKNWK.

NAD(+)-binding positions include 11–12 (RI), Asp35, Arg79, and Thr121. D-glyceraldehyde 3-phosphate-binding positions include 153–155 (SCT), Thr184, Arg199, 212–213 (TG), and Arg235. The Nucleophile role is filled by Cys154. Residue Asn317 coordinates NAD(+).

This sequence belongs to the glyceraldehyde-3-phosphate dehydrogenase family. As to quaternary structure, homotetramer.

The protein localises to the cytoplasm. It catalyses the reaction D-glyceraldehyde 3-phosphate + phosphate + NADP(+) = (2R)-3-phospho-glyceroyl phosphate + NADPH + H(+). The enzyme catalyses D-glyceraldehyde 3-phosphate + phosphate + NAD(+) = (2R)-3-phospho-glyceroyl phosphate + NADH + H(+). It participates in carbohydrate degradation; glycolysis; pyruvate from D-glyceraldehyde 3-phosphate: step 1/5. Its function is as follows. Involved in photosynthetic carbon assimilation. Catalyzes the NAD(P)-dependent oxidative phosphorylation of glyceraldehyde 3-phosphate (G3P) to 1,3-bisphosphoglycerate (BPG). The first reaction step involves the formation of a hemiacetal intermediate between G3P and a cysteine residue, and this hemiacetal intermediate is then oxidized to a thioester, with concomitant reduction of NAD to NADH. The reduced NADH is then exchanged with the second NAD, and the thioester is attacked by a nucleophilic inorganic phosphate to produce BPG. It can use both NADP and NAD. This chain is Glyceraldehyde-3-phosphate dehydrogenase 2 (gap2), found in Synechocystis sp. (strain ATCC 27184 / PCC 6803 / Kazusa).